The following is a 422-amino-acid chain: Glucuronoxylanase XynC (422 aa).

Positions Met1–Ala32 are cleaved as a signal peptide. The active-site Proton donor is the Glu171. Catalysis depends on Glu260, which acts as the Nucleophile.

This sequence belongs to the glycosyl hydrolase 30 family.

It localises to the secreted. It carries out the reaction Endohydrolysis of (1-&gt;4)-beta-D-xylosyl links in some glucuronoarabinoxylans.. It functions in the pathway glycan degradation; xylan degradation. Catalyzes the depolymerization of methylglucuronoxylan (MeGAXn) from different sources. It cleaves the beta-1,4-xylosidic bond penultimate to that linking carbon one of the xylose residue substituted with alpha-1,2-linked 4-O-methyl-D-glucuronate (MeGA). The polypeptide is Glucuronoxylanase XynC (xynC) (Bacillus subtilis (strain 168)).